The sequence spans 357 residues: Meiotic driver wtf9 (357 aa).

Residues 1 to 39 form a disordered region; sequence MKNKYYPLRSSMDEMSAKNDNEIDLEKGPLPEYNSEDGS. Residues 11-29 show a composition bias toward basic and acidic residues; the sequence is SMDEMSAKNDNEIDLEKGP. Transmembrane regions (helical) follow at residues 89-109, 119-139, 149-169, 198-218, 232-252, 256-276, and 286-306; these read LLISVLAVIVVFFTAWVCVNP, AFFVTIGITCPILLITIFCFF, CIKVTVIFLAQCVKVTVISLA, VVIIWLLWVVICYTLFLRSKF, CSISAALLLFLLYVRLPFWTL, FSGLFQVLGVQSCVVIVTKGL, and ATGYEIEASSLFVIGNFLFFY.

It belongs to the WTF family. In terms of assembly, homomer. Forms protein aggregates. The two isoforms can interact with each other and with themselves. High sequence similarity is required for their interaction.

The protein localises to the spore membrane. Its subcellular location is the vacuole membrane. It is found in the ascus epiplasm. It localises to the cytoplasm. The protein resides in the endoplasmic reticulum membrane. Functionally, promotes unequal transmission of alleles from the parental zygote to progeny spores by acting as poison/antidote system where the poison and antidote proteins are produced from the same locus; the poison component is trans-acting and targets all spores within an ascus whereas the antidote component is spore-specific, leading to poisoning of all progeny that do not inherit the allele. Its function is as follows. Localizes isoform 2 to the vacuole thereby facilitating its degradation. Forms toxic aggregates that disrupt spore maturation. The polypeptide is Meiotic driver wtf9 (Schizosaccharomyces kambucha (Fission yeast)).